Here is a 294-residue protein sequence, read N- to C-terminus: N-acetylmuramic acid 6-phosphate etherase (294 aa).

Residues 56–219 (TSYSLKNGGR…STLSMVSVGK (164 aa)) form the SIS domain. Glu84 acts as the Proton donor in catalysis. Residue Glu115 is part of the active site.

The protein belongs to the GCKR-like family. MurNAc-6-P etherase subfamily. Homodimer.

It catalyses the reaction N-acetyl-D-muramate 6-phosphate + H2O = N-acetyl-D-glucosamine 6-phosphate + (R)-lactate. Its pathway is amino-sugar metabolism; 1,6-anhydro-N-acetylmuramate degradation. It functions in the pathway amino-sugar metabolism; N-acetylmuramate degradation. It participates in cell wall biogenesis; peptidoglycan recycling. Functionally, specifically catalyzes the cleavage of the D-lactyl ether substituent of MurNAc 6-phosphate, producing GlcNAc 6-phosphate and D-lactate. Together with AnmK, is also required for the utilization of anhydro-N-acetylmuramic acid (anhMurNAc) either imported from the medium or derived from its own cell wall murein, and thus plays a role in cell wall recycling. The chain is N-acetylmuramic acid 6-phosphate etherase from Francisella tularensis subsp. novicida (strain U112).